A 69-amino-acid polypeptide reads, in one-letter code: Microcin H47 immunity protein MchI (69 aa).

Residues 1–6 (MSYKKL) lie on the Cytoplasmic side of the membrane. A helical membrane pass occupies residues 7-29 (YQLTAIFSLPLTILLVSLSSLRI). Residues 30–38 (VGEGNSYVD) lie on the Periplasmic side of the membrane. Residues 39-61 (VFLSFIIFLGFIELIHGIRKILV) traverse the membrane as a helical segment. The Cytoplasmic portion of the chain corresponds to 62–69 (WSGWKNGS).

It localises to the cell membrane. Functionally, protects a microcin H47-producer cell against microcin H47. This is Microcin H47 immunity protein MchI (mchI) from Escherichia coli.